We begin with the raw amino-acid sequence, 806 residues long: LisH domain-containing protein ARMC9 (806 aa).

Positions 7–39 constitute a LisH domain; sequence YEADLLGLVKEFLNFGEFQETLECFSKECKIKG. The stretch at 194–230 forms a coiled coil; sequence KLITLYKESLHNNQEQLQQLQQQLMETEHKARTYKKC. 3 disordered regions span residues 576 to 604, 650 to 736, and 748 to 806; these read FDESVESDDEEEEKDDEEDEDALEADLDK, PLQR…SPRI, and NSSK…SYRK. Acidic residues predominate over residues 579 to 604; sequence SVESDDEEEEKDDEEDEDALEADLDK. A compositionally biased stretch (polar residues) spans 655 to 688; the sequence is VTPSSHRAMNTVRKNSNSPSPLTNTFKSSQANKM. Residues 689-708 are compositionally biased toward low complexity; the sequence is SLSSSRPPTRSGSRASSSDS. A compositionally biased stretch (polar residues) spans 759–782; it reads EVQNATSRKTRTPTIAPQFSQSGP. Positions 783 to 806 are enriched in low complexity; the sequence is QQTSYSSSAGSSTRSRQSTQSYRK.

The protein localises to the cytoplasm. The protein resides in the cytoskeleton. It localises to the cilium basal body. It is found in the cell projection. Its subcellular location is the cilium. The protein localises to the microtubule organizing center. The protein resides in the centrosome. It localises to the centriole. Functionally, involved in ciliogenesis. It is required for appropriate acetylation and polyglutamylation of ciliary microtubules, and regulation of cilium length. Acts as a positive regulator of hedgehog (Hh)signaling. This Xenopus laevis (African clawed frog) protein is LisH domain-containing protein ARMC9 (armc9).